Here is a 257-residue protein sequence, read N- to C-terminus: Phosphatidylglycerol--prolipoprotein diacylglyceryl transferase (257 aa).

4 helical membrane passes run 12–32 (FSIR…VYLA), 49–69 (FILM…VIFE), 83–103 (IWNG…LLVI), and 109–129 (LINP…AQAI). Position 131 (R131) interacts with a 1,2-diacyl-sn-glycero-3-phospho-(1'-sn-glycerol). 3 consecutive transmembrane segments (helical) span residues 167–187 (VPTF…IMSI), 197–217 (GEVA…IEGM), and 226–246 (GLRV…VMII).

This sequence belongs to the Lgt family.

It is found in the cell membrane. It catalyses the reaction L-cysteinyl-[prolipoprotein] + a 1,2-diacyl-sn-glycero-3-phospho-(1'-sn-glycerol) = an S-1,2-diacyl-sn-glyceryl-L-cysteinyl-[prolipoprotein] + sn-glycerol 1-phosphate + H(+). It functions in the pathway protein modification; lipoprotein biosynthesis (diacylglyceryl transfer). In terms of biological role, catalyzes the transfer of the diacylglyceryl group from phosphatidylglycerol to the sulfhydryl group of the N-terminal cysteine of a prolipoprotein, the first step in the formation of mature lipoproteins. The chain is Phosphatidylglycerol--prolipoprotein diacylglyceryl transferase from Streptococcus agalactiae serotype Ia (strain ATCC 27591 / A909 / CDC SS700).